The sequence spans 575 residues: Probable ferredoxin/ferredoxin--NADP reductase (575 aa).

2 consecutive 4Fe-4S ferredoxin-type domains span residues 2-29 (PHVITQSCCNDASCVFACPVNCIHPTPD) and 37-66 (EMLYIDPVACVDCGACVTACPVSAIAPNTR). Cys9, Cys15, Cys19, Cys46, Cys49, Cys52, and Cys56 together coordinate [4Fe-4S] cluster. Positions 115 to 575 (VAVVGSGPAA…GQPIVLTVPL (461 aa)) are ferredoxin--NADP reductase. Residues Ala123, Glu143, Leu151, and Ile187 each coordinate FAD. Residues Arg213, 258–261 (NGNV), 302–303 (RR), and Glu314 each bind NADP(+). FAD-binding positions include Trp456 and 463–465 (GFI). Gly463 is an NADP(+) binding site.

It in the C-terminal section; belongs to the ferredoxin--NADP reductase family. The cofactor is [4Fe-4S] cluster. Requires FAD as cofactor.

The enzyme catalyses 2 reduced [2Fe-2S]-[ferredoxin] + NADP(+) + H(+) = 2 oxidized [2Fe-2S]-[ferredoxin] + NADPH. In Mycobacterium bovis (strain ATCC BAA-935 / AF2122/97), this protein is Probable ferredoxin/ferredoxin--NADP reductase (fprB).